Reading from the N-terminus, the 208-residue chain is AN1-type zinc finger protein 6 (208 aa).

The segment at 8–42 adopts an A20-type zinc-finger fold; sequence SQVPMLCSTGCGFYGNPRTNGMCSVCYKEHLQRQN. Zn(2+) contacts are provided by cysteine 14, cysteine 18, cysteine 30, and cysteine 33. A compositionally biased stretch (polar residues) spans 41–68; that stretch reads QNSSNGRISPPATSVSSLSESLPVQCTD. The segment at 41–140 is disordered; that stretch reads QNSSNGRISP…PSEEQSKSLE (100 aa). At serine 49 the chain carries Phosphoserine. Residues 80 to 94 show a composition bias toward low complexity; sequence STSSSMQPSPVSNQS. Polar residues-rich tracts occupy residues 95–110 and 120–133; these read LLSE…STSV and VQAS…QPSE. Residues 143-189 form an AN1-type zinc finger; the sequence is KQKKNRCFMCRKKVGLTGFECRCGNVYCGVHRYSDVHNCSYNYKADA. Zn(2+) contacts are provided by cysteine 149, cysteine 152, cysteine 163, cysteine 165, cysteine 170, histidine 173, histidine 179, and cysteine 181. Position 204 is an N6-acetyllysine (lysine 204).

Interacts with PKN1. Interacts with TRAF2. Interacts with mono- and polyubiquitin. Interacts with PEX6. Interacts with PEX5 (Cys-linked ubiquitinated). As to expression, widely expressed with high level in heart, skeletal muscle, liver, kidney and placenta.

It localises to the cytoplasm. Functionally, involved in regulation of TNF-alpha induced NF-kappa-B activation and apoptosis. Involved in modulation of 'Lys-48'-linked polyubiquitination status of TRAF2 and decreases association of TRAF2 with RIPK1. Required for PTS1 target sequence-dependent protein import into peroxisomes and PEX5 stability; may cooperate with PEX6. In vitro involved in PEX5 export from the cytosol to peroxisomes. The protein is AN1-type zinc finger protein 6 (ZFAND6) of Homo sapiens (Human).